Consider the following 142-residue polypeptide: Hemoglobin subunit alpha (142 aa).

Residues 2 to 142 (VLSPADKTNI…VSTVLTSKYR (141 aa)) form the Globin domain. Serine 4 bears the Phosphoserine mark. The residue at position 8 (lysine 8) is an N6-succinyllysine. The residue at position 9 (threonine 9) is a Phosphothreonine. Lysine 12 bears the N6-succinyllysine mark. Position 17 is an N6-acetyllysine; alternate (lysine 17). Lysine 17 is modified (N6-succinyllysine; alternate). A Phosphotyrosine modification is found at tyrosine 25. Position 36 is a phosphoserine (serine 36). Lysine 41 carries the post-translational modification N6-succinyllysine. Serine 50 is modified (phosphoserine). O2 is bound at residue histidine 59. Residue histidine 88 participates in heme b binding. Serine 103 bears the Phosphoserine mark. A Phosphothreonine modification is found at threonine 109. A Phosphoserine modification is found at serine 125. Residues threonine 135 and threonine 138 each carry the phosphothreonine modification. Serine 139 is subject to Phosphoserine.

This sequence belongs to the globin family. In terms of assembly, heterotetramer of two alpha chains and two beta chains. As to expression, red blood cells.

Functionally, involved in oxygen transport from the lung to the various peripheral tissues. Hemopressin acts as an antagonist peptide of the cannabinoid receptor CNR1. Hemopressin-binding efficiently blocks cannabinoid receptor CNR1 and subsequent signaling. The polypeptide is Hemoglobin subunit alpha (HBA) (Canis latrans (Coyote)).